The chain runs to 218 residues: Ras-related protein RabT2 (218 aa).

Residue 32-39 (GDYKTGKG) participates in GTP binding. The Effector region motif lies at 54–61 (VSSIGVDF). GTP contacts are provided by residues 80 to 84 (DANSC) and 140 to 143 (NKCD). C215 bears the Cysteine methyl ester mark. C215 carries the S-geranylgeranyl cysteine lipid modification. A propeptide spans 216–218 (NIL) (removed in mature form).

The protein belongs to the small GTPase superfamily. Rab family.

The protein localises to the cell membrane. This is Ras-related protein RabT2 (rabT2) from Dictyostelium discoideum (Social amoeba).